The sequence spans 95 residues: Small ribosomal subunit protein uS15 (95 aa).

It belongs to the universal ribosomal protein uS15 family. Part of the 30S ribosomal subunit. Forms a bridge to the 50S subunit in the 70S ribosome, contacting the 23S rRNA.

One of the primary rRNA binding proteins, it binds directly to 16S rRNA where it helps nucleate assembly of the platform of the 30S subunit by binding and bridging several RNA helices of the 16S rRNA. Its function is as follows. Forms an intersubunit bridge (bridge B4) with the 23S rRNA of the 50S subunit in the ribosome. In Streptomyces coelicolor (strain ATCC BAA-471 / A3(2) / M145), this protein is Small ribosomal subunit protein uS15.